Here is a 316-residue protein sequence, read N- to C-terminus: Probable cell division protein WhiA (316 aa).

Residues 275 to 309 (TLKELGEMVSGGKISKSGINHRLRKIDEIAEKLRA) constitute a DNA-binding region (H-T-H motif).

It belongs to the WhiA family.

In terms of biological role, involved in cell division and chromosome segregation. This chain is Probable cell division protein WhiA, found in Bacillus cereus (strain G9842).